Reading from the N-terminus, the 245-residue chain is 1-acyl-sn-glycerol-3-phosphate acyltransferase (245 aa).

An HXXXXD motif motif is present at residues 73–78; that stretch reads HQNNYD.

The protein belongs to the 1-acyl-sn-glycerol-3-phosphate acyltransferase family.

The protein resides in the cell inner membrane. It catalyses the reaction a 1-acyl-sn-glycero-3-phosphate + an acyl-CoA = a 1,2-diacyl-sn-glycero-3-phosphate + CoA. It functions in the pathway phospholipid metabolism; CDP-diacylglycerol biosynthesis; CDP-diacylglycerol from sn-glycerol 3-phosphate: step 2/3. Converts lysophosphatidic acid (LPA) into phosphatidic acid by incorporating an acyl moiety at the 2 position. This enzyme can utilize either acyl-CoA or acyl-acyl-carrier-protein as the fatty acyl donor. The chain is 1-acyl-sn-glycerol-3-phosphate acyltransferase (plsC) from Salmonella typhi.